A 490-amino-acid chain; its full sequence is Cruciferin BnC1 (490 aa).

Positions 1-23 are cleaved as a signal peptide; that stretch reads MARLSSLLSFSLALLIFLHGSTA. 2 disulfide bridges follow: cysteine 30/cysteine 63 and cysteine 106/cysteine 307. Cupin type-1 domains follow at residues 35-263 and 313-462; these read LNAL…RTAQ and DNLD…EEAR. At threonine 109 the chain carries Phosphothreonine. Residues 113-164 are disordered; sequence SSVFQPSGGSPSGEGQGQGQQGQGQGHQGQGQGQQGQQGQQGQQSQGQGFRD. Residues 122 to 148 are compositionally biased toward gly residues; it reads SPSGEGQGQGQQGQGQGHQGQGQGQQG. Over residues 149–161 the composition is skewed to low complexity; the sequence is QQGQQGQQSQGQG. Phosphotyrosine is present on tyrosine 330. Serine 332 is subject to Phosphoserine. The residue at position 426 (threonine 426) is a Phosphothreonine.

This sequence belongs to the 11S seed storage protein (globulins) family. Hexamer; each subunit is composed of an acidic and a basic chain derived from a single precursor and linked by a disulfide bond.

Functionally, this is a seed storage protein. The sequence is that of Cruciferin BnC1 (BnC1) from Brassica napus (Rape).